The sequence spans 179 residues: Protein TIFY 11a (179 aa).

The Tify domain maps to Val-62–Ala-97. The Jas motif lies at Pro-115–Tyr-140. The Nuclear localization signal motif lies at Ala-117 to Arg-124.

It belongs to the TIFY/JAZ family. As to quaternary structure, interacts with BHLH148. Interacts with COI1A in a coronatine-dependent manner. Interacts with COI1B in a coronatine-dependent manner. Coronatine is an analog of jasmonoyl isoleucine (JA-Ile). Interacts with RSS3. Forms a ternary complex with RSS3 and BHLH094 in the nucleus. Interacts with BHLH062 and NINJA1. Interacts with MYB30. Post-translationally, ubiquitinated. Targeted for degradation by the SCF(COI1) E3 ubiquitin ligase-proteasome pathway during jasmonate signaling.

The protein resides in the nucleus. In terms of biological role, repressor of jasmonate (JA) responses. Forms a ternary complex with RSS3 and BHLH94 to negatively regulate JA-responsive genes. Acts as a positive regulator of tolerance to salt stress. Involved in salt tolerance by modulating potassium homeostasis through JA signaling and regulation of the expression of potassium ion transporter genes. Acts as a transcriptional regulator targeted by the SCF(COI1) E3 ubiquitin ligase complexes in the JA signaling pathway, and interacts with BHLH062 that may directly regulate the ion transporter genes. Acts as a positive regulator of tolerance to dehydration stress. Acts as a negative regulator of tolerance to cold stress by interacting with MYB30. This chain is Protein TIFY 11a, found in Oryza sativa subsp. japonica (Rice).